The following is a 195-amino-acid chain: Flavin-dependent monooxygenase, reductase subunit HsaB (195 aa).

FAD is bound by residues 42–46, 48–49, 63–65, 69–70, and 95–96; these read PVGFA, QS, CPT, RS, and RF. 160–163 is a binding site for NAD(+); that stretch reads FYRG.

This sequence belongs to the non-flavoprotein flavin reductase family. HsaAB monooxygenase consists of an oxygenase component HsaA and a reductase component HsaB.

It carries out the reaction a reduced flavin + NAD(+) = an oxidized flavin + NADH + 2 H(+). It functions in the pathway lipid metabolism; steroid biosynthesis. Functionally, catalyzes the reduction of free flavins (FMN or FAD) by NADH. Subsequently, the reduced flavins diffuse to the HsaA oxygenase subunit. This chain is Flavin-dependent monooxygenase, reductase subunit HsaB (hsaB), found in Rhodococcus jostii (strain RHA1).